Here is a 602-residue protein sequence, read N- to C-terminus: Elongation factor 4 (602 aa).

The 182-residue stretch at lysine 8–serine 189 folds into the tr-type G domain. Residues aspartate 20–threonine 25 and asparagine 136–aspartate 139 each bind GTP.

The protein belongs to the TRAFAC class translation factor GTPase superfamily. Classic translation factor GTPase family. LepA subfamily.

The protein localises to the cell inner membrane. The catalysed reaction is GTP + H2O = GDP + phosphate + H(+). Required for accurate and efficient protein synthesis under certain stress conditions. May act as a fidelity factor of the translation reaction, by catalyzing a one-codon backward translocation of tRNAs on improperly translocated ribosomes. Back-translocation proceeds from a post-translocation (POST) complex to a pre-translocation (PRE) complex, thus giving elongation factor G a second chance to translocate the tRNAs correctly. Binds to ribosomes in a GTP-dependent manner. This is Elongation factor 4 from Helicobacter pylori (strain HPAG1).